The sequence spans 179 residues: tRNA (cytidine(56)-2'-O)-methyltransferase (179 aa).

S-adenosyl-L-methionine-binding positions include leucine 82, glycine 112–valine 116, and valine 130–glutamate 137.

Belongs to the aTrm56 family. Homodimer.

The protein resides in the cytoplasm. The enzyme catalyses cytidine(56) in tRNA + S-adenosyl-L-methionine = 2'-O-methylcytidine(56) in tRNA + S-adenosyl-L-homocysteine + H(+). Specifically catalyzes the AdoMet-dependent 2'-O-ribose methylation of cytidine at position 56 in tRNAs. The sequence is that of tRNA (cytidine(56)-2'-O)-methyltransferase from Methanococcus maripaludis (strain C5 / ATCC BAA-1333).